We begin with the raw amino-acid sequence, 335 residues long: Nucleoid-associated protein CKO_00588 (335 aa).

Belongs to the YejK family.

Its subcellular location is the cytoplasm. It is found in the nucleoid. The protein is Nucleoid-associated protein CKO_00588 of Citrobacter koseri (strain ATCC BAA-895 / CDC 4225-83 / SGSC4696).